Here is a 417-residue protein sequence, read N- to C-terminus: Equilibrative nucleotide transporter 2 (417 aa).

11 helical membrane passes run 20 to 40 (AVCWLLGVGCLLAWNSMLTIV), 52 to 72 (PSRILTIIYQSFSIGALSVLV), 85 to 105 (LFGYSLFSLGSLAVLVLNLAT), 109 to 129 (GGIGSFIGVCVISAAFGLADA), 144 to 164 (PEFLQSFLAGLAASGALTSGL), 185 to 205 (LFFAMSASFELVCVLLYAYVF), 265 to 285 (LAVTLFLVYLLTFSIFPGFLS), 292 to 312 (SLGDWYALVLIAVFNVSDLVG), 328 to 348 (CLLITSLGRLLLIPAFNITGI), 354 to 374 (WMIFLMSVLGLSNGYLTVCVI), and 393 to 413 (LVLYICGGMFAGVACDWLWLV).

It belongs to the SLC29A/ENT transporter (TC 2.A.57) family. In terms of tissue distribution, expressed in leaves and flowers.

The protein resides in the cell membrane. Functionally, may be involved in nucleoside transport. The polypeptide is Equilibrative nucleotide transporter 2 (ENT2) (Arabidopsis thaliana (Mouse-ear cress)).